Consider the following 118-residue polypeptide: Small ribosomal subunit protein uS13 (118 aa).

The interval 94-118 (GLPLRGQRTKTNARTRKGRRKGTSS) is disordered.

Belongs to the universal ribosomal protein uS13 family. As to quaternary structure, part of the 30S ribosomal subunit. Forms a loose heterodimer with protein S19. Forms two bridges to the 50S subunit in the 70S ribosome.

Located at the top of the head of the 30S subunit, it contacts several helices of the 16S rRNA. In the 70S ribosome it contacts the 23S rRNA (bridge B1a) and protein L5 of the 50S subunit (bridge B1b), connecting the 2 subunits; these bridges are implicated in subunit movement. Contacts the tRNAs in the A and P-sites. The protein is Small ribosomal subunit protein uS13 of Legionella pneumophila (strain Paris).